A 100-amino-acid chain; its full sequence is uncharacterized protein (100 aa).

Positions 65–96 (PELSKNWEKLKKEIEQKHKEIQELISEFDNMF) form a coiled coil.

This is an uncharacterized protein from Acidianus filamentous virus 2 (isolate Italy/Pozzuoli) (AFV-2).